The following is a 740-amino-acid chain: Vertnin (740 aa).

Disordered stretches follow at residues 485–506, 560–616, and 653–673; these read EAGEEETGKAGSGAPLTSRGLI, PGMQ…DQNV, and TQSQPHSGSLPSQTLAEAPGG. The span at 578 to 604 shows a compositional bias: basic and acidic residues; it reads QKPEGRQKPEEQQKPEGRQKPEGRQKP. Residues 653-667 show a composition bias toward polar residues; that stretch reads TQSQPHSGSLPSQTL.

Belongs to the vertnin family.

The protein localises to the nucleus. In terms of biological role, acts as a transcription factor that regulates development of thoracic vertebrae. This Mus musculus (Mouse) protein is Vertnin (Vrtn).